The sequence spans 398 residues: tRNA-specific 2-thiouridylase MnmA (398 aa).

ATP contacts are provided by residues Ala-18–Ser-25 and Leu-44. Cys-112 serves as the catalytic Nucleophile. A disulfide bridge connects residues Cys-112 and Cys-213. Gly-136 lines the ATP pocket. The interval Arg-163–Gln-165 is interaction with tRNA. Cys-213 functions as the Cysteine persulfide intermediate in the catalytic mechanism.

Belongs to the MnmA/TRMU family.

It is found in the cytoplasm. It catalyses the reaction S-sulfanyl-L-cysteinyl-[protein] + uridine(34) in tRNA + AH2 + ATP = 2-thiouridine(34) in tRNA + L-cysteinyl-[protein] + A + AMP + diphosphate + H(+). In terms of biological role, catalyzes the 2-thiolation of uridine at the wobble position (U34) of tRNA, leading to the formation of s(2)U34. This is tRNA-specific 2-thiouridylase MnmA from Rhizobium meliloti (strain 1021) (Ensifer meliloti).